Reading from the N-terminus, the 660-residue chain is Arginine--tRNA ligase, cytoplasmic (660 aa).

The could be involved in the assembly of the multisynthetase complex stretch occupies residues 1–72 (MELPVCFYEE…LEEKKKSSKS (72 aa)). L-arginine-binding positions include 200–202 (SPN), H211, Y384, D388, and Q412. The short motif at 201-212 (PNIAKEMHVGHL) is the 'HIGH' region element. The interaction with tRNA stretch occupies residues 529-543 (NTAAYLLYAYTRIRS).

It belongs to the class-I aminoacyl-tRNA synthetase family. In terms of assembly, monomer; also part of a multisubunit complex that groups tRNA ligases for Arg, Asp, Glu, Gln, Ile, Leu, Lys, Met and Pro.

The protein localises to the cytoplasm. It is found in the cytosol. It carries out the reaction tRNA(Arg) + L-arginine + ATP = L-arginyl-tRNA(Arg) + AMP + diphosphate. Its function is as follows. Forms part of a macromolecular complex that catalyzes the attachment of specific amino acids to cognate tRNAs during protein synthesis. This Xenopus tropicalis (Western clawed frog) protein is Arginine--tRNA ligase, cytoplasmic (rars1).